A 185-amino-acid polypeptide reads, in one-letter code: uncharacterized protein (185 aa).

Positions 39–177 constitute a Nudix hydrolase domain; it reads LWHASAGVLV…SWPFVPDSRA (139 aa). The short motif at 77 to 99 is the Nudix box element; sequence GGVVDPGETPQETAIREVGEELG. Residues Glu-93 and Glu-97 each coordinate Mg(2+).

This sequence belongs to the Nudix hydrolase family. Mg(2+) serves as cofactor.

This is an uncharacterized protein from Rhodococcus erythropolis (Arthrobacter picolinophilus).